The chain runs to 389 residues: ATP phosphoribosyltransferase regulatory subunit (389 aa).

It belongs to the class-II aminoacyl-tRNA synthetase family. HisZ subfamily. As to quaternary structure, heteromultimer composed of HisG and HisZ subunits.

Its subcellular location is the cytoplasm. It functions in the pathway amino-acid biosynthesis; L-histidine biosynthesis; L-histidine from 5-phospho-alpha-D-ribose 1-diphosphate: step 1/9. Its function is as follows. Required for the first step of histidine biosynthesis. May allow the feedback regulation of ATP phosphoribosyltransferase activity by histidine. This Hydrogenovibrio crunogenus (strain DSM 25203 / XCL-2) (Thiomicrospira crunogena) protein is ATP phosphoribosyltransferase regulatory subunit.